Here is a 316-residue protein sequence, read N- to C-terminus: Serpentine receptor class delta-45 (316 aa).

7 helical membrane passes run 8–28, 42–62, 91–111, 128–148, 184–204, 234–254, and 266–286; these read VFYP…IFII, ILLV…LIQI, YFLT…TIYL, VTFF…SLIL, IIIT…GLLL, LQVF…LVLA, and FFSV…LYSV.

The protein belongs to the nematode receptor-like protein srd family.

The protein localises to the membrane. The protein is Serpentine receptor class delta-45 (srd-45) of Caenorhabditis elegans.